A 209-amino-acid chain; its full sequence is Protein-L-isoaspartate O-methyltransferase (209 aa).

Ser59 is an active-site residue.

It belongs to the methyltransferase superfamily. L-isoaspartyl/D-aspartyl protein methyltransferase family. Monomer.

The protein resides in the cytoplasm. It catalyses the reaction [protein]-L-isoaspartate + S-adenosyl-L-methionine = [protein]-L-isoaspartate alpha-methyl ester + S-adenosyl-L-homocysteine. In terms of biological role, catalyzes the methyl esterification of L-isoaspartyl residues in peptides and proteins that result from spontaneous decomposition of normal L-aspartyl and L-asparaginyl residues. It plays a role in the repair and/or degradation of damaged proteins. The protein is Protein-L-isoaspartate O-methyltransferase (pcm) of Helicobacter pylori (strain J99 / ATCC 700824) (Campylobacter pylori J99).